The chain runs to 425 residues: Serine--tRNA ligase (425 aa).

Position 233-235 (233-235 (TAE)) interacts with L-serine. 264–266 (RAE) lines the ATP pocket. Glu-287 serves as a coordination point for L-serine. An ATP-binding site is contributed by 351–354 (EISS). Ser-387 is an L-serine binding site.

The protein belongs to the class-II aminoacyl-tRNA synthetase family. Type-1 seryl-tRNA synthetase subfamily. In terms of assembly, homodimer. The tRNA molecule binds across the dimer.

The protein localises to the cytoplasm. The enzyme catalyses tRNA(Ser) + L-serine + ATP = L-seryl-tRNA(Ser) + AMP + diphosphate + H(+). It carries out the reaction tRNA(Sec) + L-serine + ATP = L-seryl-tRNA(Sec) + AMP + diphosphate + H(+). It functions in the pathway aminoacyl-tRNA biosynthesis; selenocysteinyl-tRNA(Sec) biosynthesis; L-seryl-tRNA(Sec) from L-serine and tRNA(Sec): step 1/1. Its function is as follows. Catalyzes the attachment of serine to tRNA(Ser). Is also able to aminoacylate tRNA(Sec) with serine, to form the misacylated tRNA L-seryl-tRNA(Sec), which will be further converted into selenocysteinyl-tRNA(Sec). The protein is Serine--tRNA ligase of Clostridium perfringens (strain SM101 / Type A).